Consider the following 249-residue polypeptide: Phosphoadenosine 5'-phosphosulfate reductase (249 aa).

The active-site Nucleophile; cysteine thiosulfonate intermediate is the Cys-230.

Belongs to the PAPS reductase family. CysH subfamily.

Its subcellular location is the cytoplasm. It catalyses the reaction [thioredoxin]-disulfide + sulfite + adenosine 3',5'-bisphosphate + 2 H(+) = [thioredoxin]-dithiol + 3'-phosphoadenylyl sulfate. The protein operates within sulfur metabolism; hydrogen sulfide biosynthesis; sulfite from sulfate: step 3/3. Functionally, catalyzes the formation of sulfite from phosphoadenosine 5'-phosphosulfate (PAPS) using thioredoxin as an electron donor. In Synechocystis sp. (strain ATCC 27184 / PCC 6803 / Kazusa), this protein is Phosphoadenosine 5'-phosphosulfate reductase.